Here is a 51-residue protein sequence, read N- to C-terminus: Small ribosomal subunit protein eS31 (51 aa).

Residues C21, C24, C39, and C42 each contribute to the Zn(2+) site. The segment at 21–42 (CVRCSNGVFMADHGDRYACGKC) adopts a C4-type zinc-finger fold.

Belongs to the eukaryotic ribosomal protein eS31 family. In terms of assembly, part of the 30S ribosomal subunit. The cofactor is Zn(2+).

In Methanothermobacter thermautotrophicus (strain ATCC 29096 / DSM 1053 / JCM 10044 / NBRC 100330 / Delta H) (Methanobacterium thermoautotrophicum), this protein is Small ribosomal subunit protein eS31.